Consider the following 66-residue polypeptide: Large ribosomal subunit protein bL32 (66 aa).

This sequence belongs to the bacterial ribosomal protein bL32 family.

The chain is Large ribosomal subunit protein bL32 from Rickettsia conorii (strain ATCC VR-613 / Malish 7).